Consider the following 236-residue polypeptide: Glycosylphosphatidylinositol anchor biosynthesis protein 11 (236 aa).

2 helical membrane-spanning segments follow: residues 40 to 60 (TLTI…FGLT) and 65 to 85 (GVML…GYLI). Residue N99 is glycosylated (N-linked (GlcNAc...) asparagine). Transmembrane regions (helical) follow at residues 107 to 127 (LLAG…VALI), 139 to 159 (ETYL…LVLY), 184 to 204 (ILLS…PIPL), and 215 to 235 (ITLL…CFLF).

Belongs to the PIGF family.

The protein resides in the endoplasmic reticulum membrane. It functions in the pathway glycolipid biosynthesis; glycosylphosphatidylinositol-anchor biosynthesis. In terms of biological role, acts in the GPI biosynthetic pathway between GlcNAc-PI synthesis and GPI transfer to protein. The polypeptide is Glycosylphosphatidylinositol anchor biosynthesis protein 11 (GPI11) (Debaryomyces hansenii (strain ATCC 36239 / CBS 767 / BCRC 21394 / JCM 1990 / NBRC 0083 / IGC 2968) (Yeast)).